A 225-amino-acid polypeptide reads, in one-letter code: Peroxiredoxin-2E-2, chloroplastic (225 aa).

A chloroplast-targeting transit peptide spans 1–42; that stretch reads MAAPTAAALSTLSTASVTSGKRFITSSFSLSFSSRPLATGVR. Residues 63–225 form the Thioredoxin domain; that stretch reads IAVGDKLPDA…SSAEEMLKAL (163 aa). Cys111 (cysteine sulfenic acid (-SOH) intermediate) is an active-site residue.

It belongs to the peroxiredoxin family. Prx5 subfamily. In terms of assembly, monomer.

It is found in the plastid. It localises to the chloroplast stroma. It carries out the reaction [glutaredoxin]-dithiol + a hydroperoxide = [glutaredoxin]-disulfide + an alcohol + H2O. Functionally, thiol-specific peroxidase that catalyzes the reduction of hydrogen peroxide and organic hydroperoxides to water and alcohols, respectively. Plays a role in cell protection against oxidative stress by detoxifying peroxides. May be involved in chloroplast redox homeostasis. This chain is Peroxiredoxin-2E-2, chloroplastic (PRXIIE-2), found in Oryza sativa subsp. japonica (Rice).